Here is a 448-residue protein sequence, read N- to C-terminus: Phosphoglucosamine mutase (448 aa).

The active-site Phosphoserine intermediate is Ser-100. Residues Ser-100, Asp-240, Asp-242, and Asp-244 each contribute to the Mg(2+) site. Ser-100 is subject to Phosphoserine.

Belongs to the phosphohexose mutase family. As to quaternary structure, homodimer, may form a complex with CdaA. The cofactor is Mg(2+). Activated by phosphorylation.

It catalyses the reaction alpha-D-glucosamine 1-phosphate = D-glucosamine 6-phosphate. Its function is as follows. Catalyzes the conversion of glucosamine-6-phosphate to glucosamine-1-phosphate. Glucosamine-1-phosphate is used for cell wall biosynthesis. The polypeptide is Phosphoglucosamine mutase (Bacillus subtilis (strain 168)).